A 375-amino-acid polypeptide reads, in one-letter code: MAAIKYRLIKKDSRTNARLGILETPHGIIETPVFMPVGTQATVKSMTPEELKEIGATIILSNTYHLYLRPGHKIIEKAGGLHKFMNWDRAILTDSGGFQVFSLNSLRKITEDGVEFRSHIDGSRHFFTPEKVIEIQNALGSDIMMSFDECAPYPADYDYVKKSMELTIKWAERGKRAHKNTEKQALFGIVQGGTYEDLRKECAQRLVDMDFPGYSIGGLSVGEPKNVMYDIVDLTTEYLPEDKPRYLMGVGSPDDLIEGVIRGVDMFDCVLPTRIARNGTVFTSKGKLIVRDAPYAEDFSPLDEECDCYTCRNYSRAYIRHLFKANEILAARLATIHNLYFLIKLMERIREAIRQDRLLEFKKQFFKKYGYKEEY.

Asp-94 functions as the Proton acceptor in the catalytic mechanism. Residues 94–98 (DSGGF), Asp-148, Gln-191, and Gly-218 each bind substrate. The segment at 249–255 (GVGSPDD) is RNA binding. Asp-268 acts as the Nucleophile in catalysis. The segment at 273–277 (TRIAR) is RNA binding; important for wobble base 34 recognition. Residues Cys-306, Cys-308, Cys-311, and His-337 each coordinate Zn(2+).

This sequence belongs to the queuine tRNA-ribosyltransferase family. In terms of assembly, homodimer. Within each dimer, one monomer is responsible for RNA recognition and catalysis, while the other monomer binds to the replacement base PreQ1. The cofactor is Zn(2+).

The catalysed reaction is 7-aminomethyl-7-carbaguanine + guanosine(34) in tRNA = 7-aminomethyl-7-carbaguanosine(34) in tRNA + guanine. It functions in the pathway tRNA modification; tRNA-queuosine biosynthesis. In terms of biological role, catalyzes the base-exchange of a guanine (G) residue with the queuine precursor 7-aminomethyl-7-deazaguanine (PreQ1) at position 34 (anticodon wobble position) in tRNAs with GU(N) anticodons (tRNA-Asp, -Asn, -His and -Tyr). Catalysis occurs through a double-displacement mechanism. The nucleophile active site attacks the C1' of nucleotide 34 to detach the guanine base from the RNA, forming a covalent enzyme-RNA intermediate. The proton acceptor active site deprotonates the incoming PreQ1, allowing a nucleophilic attack on the C1' of the ribose to form the product. After dissociation, two additional enzymatic reactions on the tRNA convert PreQ1 to queuine (Q), resulting in the hypermodified nucleoside queuosine (7-(((4,5-cis-dihydroxy-2-cyclopenten-1-yl)amino)methyl)-7-deazaguanosine). The chain is Queuine tRNA-ribosyltransferase from Thermoanaerobacter pseudethanolicus (strain ATCC 33223 / 39E) (Clostridium thermohydrosulfuricum).